A 79-amino-acid polypeptide reads, in one-letter code: Conotoxin Vi6.4 (79 aa).

The signal sequence occupies residues 1-22 (MKLTCVLIITVLFLTASQLITA). Positions 23 to 47 (DYSGDKRQYRAVRLRDEMRNFKGAR) are excised as a propeptide. Cystine bridges form between Cys-49/Cys-62, Cys-56/Cys-67, and Cys-61/Cys-77. 4-hydroxyproline is present on residues Pro-60 and Pro-63.

It belongs to the conotoxin O1 superfamily. In terms of tissue distribution, expressed by the venom duct.

It is found in the secreted. Its function is as follows. Ion channel inhibitor that inhibits the increase in intracellular calcium upon depolarization in DRG neurons. In vivo, both intraperitoneal and intracranial injections into mice induce hyperactivity. This chain is Conotoxin Vi6.4, found in Conus virgo (Virgin cone).